Consider the following 122-residue polypeptide: Large ribosomal subunit protein uL14 (122 aa).

Belongs to the universal ribosomal protein uL14 family. In terms of assembly, part of the 50S ribosomal subunit. Forms a cluster with proteins L3 and L19. In the 70S ribosome, L14 and L19 interact and together make contacts with the 16S rRNA in bridges B5 and B8.

Binds to 23S rRNA. Forms part of two intersubunit bridges in the 70S ribosome. The chain is Large ribosomal subunit protein uL14 from Synechococcus sp. (strain JA-3-3Ab) (Cyanobacteria bacterium Yellowstone A-Prime).